Here is a 214-residue protein sequence, read N- to C-terminus: MVMIMELLYAITAFILGMLHALEPGHGKSVVAAYILGTKADLKDAILLGTTITISHTAVIFLLGILSIYLLESLNVDVVHDMMSVVGGLILIAVGIWIIRSYLHPHEHKVDTKKGVITLGLSAGLVPCPAALAVLLLSISSGNLIDGLIYVAIFSIGLAISLTGLAVAFVESKELIKKYVGNRKVSKLPLISGSIIILIGLYTIAHPILEHAIV.

The next 6 membrane-spanning stretches (helical) occupy residues 2–22 (VMIM…LHAL), 46–66 (ILLG…LGIL), 79–99 (VHDM…IWII), 116–136 (VITL…AVLL), 149–169 (IYVA…AVAF), and 188–208 (LPLI…AHPI).

The protein belongs to the NiCoT transporter (TC 2.A.52) family.

It localises to the cell membrane. Its function is as follows. Efflux system for nickel and cobalt. The polypeptide is Putative nickel/cobalt efflux system MJ1092 (Methanocaldococcus jannaschii (strain ATCC 43067 / DSM 2661 / JAL-1 / JCM 10045 / NBRC 100440) (Methanococcus jannaschii)).